Consider the following 379-residue polypeptide: Chaperone protein DnaJ (379 aa).

The region spanning 5 to 70 is the J domain; the sequence is DYYEVLGVGK…EKKAAYDQYG (66 aa). A CR-type zinc finger spans residues 139-217; it reads GHEAQIRVPH…CHGQGKLKSQ (79 aa). Positions 152, 155, 169, 172, 191, 194, 205, and 208 each coordinate Zn(2+). 4 CXXCXGXG motif repeats span residues 152–159, 169–176, 191–198, and 205–212; these read CEHCHGNG, CPTCNGVG, CPKCHGSG, and CTKCHGQG.

It belongs to the DnaJ family. Homodimer. Zn(2+) serves as cofactor.

The protein localises to the cytoplasm. In terms of biological role, participates actively in the response to hyperosmotic and heat shock by preventing the aggregation of stress-denatured proteins and by disaggregating proteins, also in an autonomous, DnaK-independent fashion. Unfolded proteins bind initially to DnaJ; upon interaction with the DnaJ-bound protein, DnaK hydrolyzes its bound ATP, resulting in the formation of a stable complex. GrpE releases ADP from DnaK; ATP binding to DnaK triggers the release of the substrate protein, thus completing the reaction cycle. Several rounds of ATP-dependent interactions between DnaJ, DnaK and GrpE are required for fully efficient folding. Also involved, together with DnaK and GrpE, in the DNA replication of plasmids through activation of initiation proteins. This Cupriavidus metallidurans (strain ATCC 43123 / DSM 2839 / NBRC 102507 / CH34) (Ralstonia metallidurans) protein is Chaperone protein DnaJ.